A 155-amino-acid polypeptide reads, in one-letter code: Microsomal glutathione S-transferase 1 (155 aa).

The Lumenal segment spans residues 3 to 9; the sequence is DLTELMK. A helical membrane pass occupies residues 10–33; the sequence is NEVFMAFASYATIVLSKMMFMSTA. At 34-62 the chain is on the cytoplasmic side; that stretch reads TAFYRLTRKVFANPEDCSSFGKGENAKKY. A glutathione-binding site is contributed by Arg-38. Lys-42, Lys-55, and Lys-60 each carry N6-acetyllysine. Residues 63–96 form a helical membrane-spanning segment; it reads LRTDERVERVRRAHLNDLENIVPFLGIGLLYSLS. Glutathione is bound by residues Arg-73, Arg-74, His-76, and Glu-81. The Lumenal portion of the chain corresponds to 97-99; that stretch reads GPD. Residues 100 to 123 traverse the membrane as a helical segment; it reads LSTAILHFRLFVGARIYHTIAYLT. Tyr-121 is a binding site for glutathione. The Cytoplasmic segment spans residues 124 to 128; sequence PLPQP. The helical transmembrane segment at 129 to 148 threads the bilayer; sequence NRGLAFFLGYGVTLSMAYRL. Topologically, residues 149 to 155 are lumenal; sequence LKSRLYL.

Belongs to the MAPEG family. Homotrimer; The trimer binds only one molecule of glutathione.

The protein resides in the endoplasmic reticulum membrane. The protein localises to the mitochondrion outer membrane. It catalyses the reaction RX + glutathione = an S-substituted glutathione + a halide anion + H(+). Functionally, conjugation of reduced glutathione to a wide number of exogenous and endogenous hydrophobic electrophiles. The sequence is that of Microsomal glutathione S-transferase 1 (MGST1) from Sus scrofa (Pig).